Reading from the N-terminus, the 68-residue chain is Conotoxin Lp5.2 (68 aa).

Positions 1 to 19 (MRCVPVFIILLLLASPAAP) are cleaved as a signal peptide. Positions 20–54 (KSLETRIQNDLIRAGLTDADLKTEKGFLSGLLNVA) are excised as a propeptide.

It belongs to the conotoxin T superfamily. In terms of processing, contains 2 disulfide bonds that can be either 'C1-C3, C2-C4' or 'C1-C4, C2-C3', since these disulfide connectivities have been observed for conotoxins with cysteine framework V (for examples, see AC P0DQQ7 and AC P81755). In terms of tissue distribution, expressed by the venom duct.

It localises to the secreted. In Conus leopardus (Leopard cone), this protein is Conotoxin Lp5.2.